The chain runs to 236 residues: Ubiquinone biosynthesis O-methyltransferase (236 aa).

4 residues coordinate S-adenosyl-L-methionine: arginine 39, glycine 59, aspartate 80, and methionine 124.

Belongs to the methyltransferase superfamily. UbiG/COQ3 family.

It carries out the reaction a 3-demethylubiquinol + S-adenosyl-L-methionine = a ubiquinol + S-adenosyl-L-homocysteine + H(+). The catalysed reaction is a 3-(all-trans-polyprenyl)benzene-1,2-diol + S-adenosyl-L-methionine = a 2-methoxy-6-(all-trans-polyprenyl)phenol + S-adenosyl-L-homocysteine + H(+). It participates in cofactor biosynthesis; ubiquinone biosynthesis. O-methyltransferase that catalyzes the 2 O-methylation steps in the ubiquinone biosynthetic pathway. In Shewanella halifaxensis (strain HAW-EB4), this protein is Ubiquinone biosynthesis O-methyltransferase.